Here is a 94-residue protein sequence, read N- to C-terminus: Histone-like DNA-binding protein (94 aa).

The protein belongs to the bacterial histone-like protein family.

This is Histone-like DNA-binding protein from Rickettsia bellii (strain RML369-C).